The primary structure comprises 491 residues: MLELPIISITIFLPLISVLYILLFFNQNKKADKLSIYVAMLSSVLTFISTIYILIEFDVSNNTYQFVERYTWLDKIGLEFHVGVDGIAIFFVVLTSFLTLICIIGSLFTIKKYIKEYLVCFLLMESLCIGAFTSINLLLFYLFFEAILVPMYIIIGVWGGDNRIYAALKFFLYTFFGSVFFLLALIYIYSKIHSFDLTNILELIGNIPLFAQKILWWAIFIAFAIKTPMIPFHTWLPDAHVQAPTTGSVILAGILLKLGGYGFLRVLLPLFPNASQEFAIYVIYLSVIAIIYASLVALAQKDIKQMIAYSSIAHMGYVTIGIFSFTEIGISGAIFQMLSHGIISSSLFLIVGTLYERLHTKEIAKYGGVANKMPILATFFMIAMLSSIGLPSTSGFIGEFLSLLGIYKVNVVTAFIAALGIILGAVYMLKLYKEVMLGEITNTEIKHFRDLYKYEIISIAPLILLIIYFGLMPNSILNVFHLSVENLLIKF.

Helical transmembrane passes span 5-25 (PIIS…LLFF), 35-55 (SIYV…YILI), 87-107 (IAIF…IGSL), 116-136 (EYLV…TSIN), 137-157 (LLLF…IIGV), 170-190 (FFLY…YIYS), 203-223 (LIGN…FIAF), 249-269 (VILA…VLLP), 278-298 (FAIY…LVAL), 315-335 (MGYV…GAIF), 336-356 (QMLS…TLYE), 373-393 (MPIL…LPST), 409-429 (VNVV…VYML), and 456-476 (IISI…PNSI).

Belongs to the complex I subunit 4 family.

Its subcellular location is the cell membrane. The catalysed reaction is a quinone + NADH + 5 H(+)(in) = a quinol + NAD(+) + 4 H(+)(out). Its function is as follows. NDH-1 shuttles electrons from NADH, via FMN and iron-sulfur (Fe-S) centers, to quinones in the respiratory chain. Couples the redox reaction to proton translocation (for every two electrons transferred, four hydrogen ions are translocated across the cytoplasmic membrane), and thus conserves the redox energy in a proton gradient. The protein is NADH-quinone oxidoreductase subunit M (nuoM) of Rickettsia prowazekii (strain Madrid E).